Here is a 537-residue protein sequence, read N- to C-terminus: Protein swallow (537 aa).

Residues 344–406 form a disordered region; that stretch reads QPNAGKPKKN…SESSHPSSND (63 aa). 2 stretches are compositionally biased toward low complexity: residues 371–383 and 392–406; these read NGNG…HSSS and AAPN…SSND.

May be constituted of a homo- or heterodimer.

Its subcellular location is the nucleus. Its function is as follows. Has a role in localizing bicoid mRNA at the anterior margin of the oocyte during oogenesis, and a poorly characterized role in nuclear divisions in early embryogenesis. The polypeptide is Protein swallow (swa) (Drosophila pseudoobscura pseudoobscura (Fruit fly)).